Reading from the N-terminus, the 224-residue chain is Lipoprotein-releasing system ATP-binding protein LolD (224 aa).

Residues 6–224 (VRLRELRRSF…VVRLHEGVLE (219 aa)) enclose the ABC transporter domain. ATP is bound at residue 42-49 (GPSGSGKS).

The protein belongs to the ABC transporter superfamily. Lipoprotein translocase (TC 3.A.1.125) family. As to quaternary structure, the complex is composed of two ATP-binding proteins (LolD) and two transmembrane proteins (LolC and LolE).

The protein resides in the cell inner membrane. In terms of biological role, part of the ABC transporter complex LolCDE involved in the translocation of mature outer membrane-directed lipoproteins, from the inner membrane to the periplasmic chaperone, LolA. Responsible for the formation of the LolA-lipoprotein complex in an ATP-dependent manner. In Novosphingobium aromaticivorans (strain ATCC 700278 / DSM 12444 / CCUG 56034 / CIP 105152 / NBRC 16084 / F199), this protein is Lipoprotein-releasing system ATP-binding protein LolD.